A 1193-amino-acid chain; its full sequence is MSSPTSTSPKSSFVFSPTSFPHAAIASNNVRPRTNLPPPPPPDRIPPPKGRSHQQKFKILRKEKDKDRRQPIDLEDDWTIEDVTVNGDGVEQESQYLDDLQPEENELKPGPRFLEMANREEKKEKTSKSRGLVKKTSRLFGRDKDKDRGKPEEPAVTGSSSSTLAAMRQSSSTSTDSTTSRSITSAFTRQNSIQSRRSPRTSFGQAHSRRASQDSQMSWPAPRSIRSSTTSHDPSSDPQNSASSTGVPIPQRQGASMSSLSRYSLPHPNGGTSRSPDTFPNKMSTWFSHLLPVSSGSPPSSSYETSSSIRKQSSVAASLFNAARQKAVDGVRHLLDSEAQPDKCMDTIWVRGVAHPGWRPITPENSTSNLPALEPGGSGGGVEDRRASLSMNGPSPNSLRPSSWKRNTSLPPTGQPQSPAHVHTQASNQTTSPSKGFTGIWNPSTLSLGMPIGGSPNKEKENGSGAESPSKKKSKEIVKWPEQFYDDFKSTVWFTYRNQYAPISSLSPNLLIPSPEAYYASFGPPLDATSPSSLRVTTPTAAAQQSASGSGGWGWSKEERGLTSDAGWGCMLRTGQSLLVNALIHIHLGRDWRVPSTPASFSEATTTQEIAALKDYAKYAQMLSWFLDDPSPLCPFSVHRMALIGKELGKEVGEWFGPSTAAGALKTLANSFAPCGVAVATATDSIIYKSDVYTASNLPSDDWNSISPTFNSSKKKRRGDNEAKEEKWGKRAVLILVGVRLGLDGVNPIYYDSIKALFTFPQSVGIAGGRPSSSYYFVGSQANHLFYLDPHLTRPAIPLQIPPLPVHSAKEKGSTESSSIMSTAEEESEEGVMIRTPETPRSTTPSMFSAPEHVEDEDQEEWGQGSKYKLDVVDADGVEVEGIDDDKGRNEGKMIREEVPKSSFESNGAAQEQPKKQKGFTSTASIDSQVDSQVDPHMLWYTTAYPDPLLRTYHCEKIKKMPLSGLDPSMLLGFVCKDEDDFEDFVERVAQLPKKIFTVQDEMPSWEEDDDAGLESVSEPDFEGDEFEEPGTAKPRFDSSSPVNEDSLKGPRVVSASTTATPLAAKEEDHLDVEEANSTDDDNESIGTTTAAGPMDIARHLNRVDLSSKREQEGDDDDGEWVGGTPSSQGVLVEPPSLKGTPSKSRSSAFEPRYEQNGETEQERPVFPARNRMESWVEPVCEGKEAPNGDNLL.

Disordered stretches follow at residues 23 to 284 and 358 to 474; these read AAIA…NKMS and WRPI…KKKS. The span at 35 to 49 shows a compositional bias: pro residues; it reads NLPPPPPPDRIPPPK. Over residues 50–59 the composition is skewed to basic residues; the sequence is GRSHQQKFKI. Basic and acidic residues-rich tracts occupy residues 60–72, 117–127, and 140–153; these read LRKE…RQPI, ANREEKKEKTS, and FGRD…KPEE. A compositionally biased stretch (low complexity) spans 170 to 185; sequence SSSTSTDSTTSRSITS. The segment covering 186–205 has biased composition (polar residues); sequence AFTRQNSIQSRRSPRTSFGQ. Residues 227–238 are compositionally biased toward low complexity; the sequence is SSTTSHDPSSDP. 3 stretches are compositionally biased toward polar residues: residues 253 to 262, 270 to 284, and 389 to 447; these read QGASMSSLSR, GGTS…NKMS, and LSMN…STLS. C570 (nucleophile) is an active-site residue. Residues D789 and H791 contribute to the active site. Disordered stretches follow at residues 807 to 869, 899 to 924, and 1000 to 1171; these read HSAK…SKYK, VPKS…TSTA, and QDEM…PARN. Low complexity predominate over residues 835–846; that stretch reads RTPETPRSTTPS. Acidic residues-rich tracts occupy residues 1004-1029 and 1070-1084; these read PSWE…EFEE and HLDV…DDNE. Composition is skewed to basic and acidic residues over residues 1097 to 1112 and 1152 to 1164; these read IARH…KREQ and PRYE…EQER.

This sequence belongs to the peptidase C54 family.

It is found in the cytoplasm. The protein localises to the nucleus. It localises to the preautophagosomal structure. The catalysed reaction is [protein]-C-terminal L-amino acid-glycyl-phosphatidylethanolamide + H2O = [protein]-C-terminal L-amino acid-glycine + a 1,2-diacyl-sn-glycero-3-phosphoethanolamine. Functionally, cysteine protease that plays a key role in cytoplasm to vacuole transport (Cvt) and autophagy by mediating both proteolytic activation and delipidation of ATG8. Required for selective autophagic degradation of the nucleus (nucleophagy) as well as for mitophagy which contributes to regulate mitochondrial quantity and quality by eliminating the mitochondria to a basal level to fulfill cellular energy requirements and preventing excess ROS production. The protease activity is required for proteolytic activation of ATG8: cleaves the C-terminal amino acid of ATG8 to reveal a C-terminal glycine. ATG8 ubiquitin-like activity requires the exposure of the glycine at the C-terminus for its conjugation to phosphatidylethanolamine (PE) and its insertion to membranes, which is necessary for autophagy. The ATG8-PE conjugate mediates tethering between adjacent membranes and stimulates membrane hemifusion, leading to expansion of the autophagosomal membrane during autophagy. In addition to the protease activity, also catalyzes deconjugation of PE-conjugated forms of ATG8 during macroautophagy: ATG8 delipidation is required to release the protein from membranes, which facilitates multiple events during macroautophagy, and especially for efficient autophagosome biogenesis, the assembly of ATG9-containing tubulovesicular clusters into phagophores/autophagosomes, and for the disassembly of PAS-associated ATG components. ATG8 delipidation by ATG4 also recycles ATG8-PE generated on inappropriate membranes to maintain a reservoir of unlipidated ATG8 that is required for autophagosome formation at the PAS. This is Cysteine protease ATG4 (ATG4) from Cryptococcus neoformans var. neoformans serotype D (strain JEC21 / ATCC MYA-565) (Filobasidiella neoformans).